The chain runs to 754 residues: 5-methyltetrahydropteroyltriglutamate--homocysteine methyltransferase (754 aa).

5-methyltetrahydropteroyltri-L-glutamate contacts are provided by residues 15–18 and K114; that span reads RELK. Residues 430-432 and E483 each bind L-homocysteine; that span reads IGS. L-methionine-binding positions include 430 to 432 and E483; that span reads IGS. 5-methyltetrahydropteroyltri-L-glutamate contacts are provided by residues 514 to 515 and W560; that span reads RC. D598 is a binding site for L-homocysteine. L-methionine is bound at residue D598. E604 lines the 5-methyltetrahydropteroyltri-L-glutamate pocket. The Zn(2+) site is built by H641, C643, and E665. H694 functions as the Proton donor in the catalytic mechanism. C726 provides a ligand contact to Zn(2+).

The protein belongs to the vitamin-B12 independent methionine synthase family. Requires Zn(2+) as cofactor.

The enzyme catalyses 5-methyltetrahydropteroyltri-L-glutamate + L-homocysteine = tetrahydropteroyltri-L-glutamate + L-methionine. The protein operates within amino-acid biosynthesis; L-methionine biosynthesis via de novo pathway; L-methionine from L-homocysteine (MetE route): step 1/1. Functionally, catalyzes the transfer of a methyl group from 5-methyltetrahydrofolate to homocysteine resulting in methionine formation. This chain is 5-methyltetrahydropteroyltriglutamate--homocysteine methyltransferase, found in Campylobacter jejuni subsp. jejuni serotype O:23/36 (strain 81-176).